The primary structure comprises 275 residues: MSVRRLAEDTVQPAAFAFSKENAAWAEATIKKYPEGREQSAVIPLLMRAQEQDGWVTRAAIESVADMLGMAYIRVLEVATFYTQFQLQPVGTRAHVQVCGTTPCMLRGAEDLIKICKKKIASEPFTLNEGGTLSWEEVECQGACVNAPMVMIFKDTFEDLTPERLEEIIDRFEAGKGSEVVPGPQIDRVYSAPIGGLTTLQAPEPVEEKKSVRASKAKDEQAVSVPPSNAAKPSTATDVTNPTLKTPATARKAAAKNVKIEGETVDKSKPAKKPR.

Cysteine 99, cysteine 104, cysteine 140, and cysteine 144 together coordinate [2Fe-2S] cluster. The segment at 200–275 (LQAPEPVEEK…DKSKPAKKPR (76 aa)) is disordered. Over residues 206–221 (VEEKKSVRASKAKDEQ) the composition is skewed to basic and acidic residues. Residues 231-242 (AKPSTATDVTNP) are compositionally biased toward polar residues. Residues 243–256 (TLKTPATARKAAAK) show a composition bias toward low complexity. Residues 258–269 (VKIEGETVDKSK) show a composition bias toward basic and acidic residues.

This sequence belongs to the complex I 24 kDa subunit family. [2Fe-2S] cluster serves as cofactor.

It catalyses the reaction a quinone + NADH + 5 H(+)(in) = a quinol + NAD(+) + 4 H(+)(out). Functionally, NDH-1 shuttles electrons from NADH, via FMN and iron-sulfur (Fe-S) centers, to quinones in the respiratory chain. The immediate electron acceptor for the enzyme in this species is believed to be ubiquinone. Couples the redox reaction to proton translocation (for every two electrons transferred, four hydrogen ions are translocated across the cytoplasmic membrane), and thus conserves the redox energy in a proton gradient. In Rhizobium meliloti (strain 1021) (Ensifer meliloti), this protein is NADH-quinone oxidoreductase subunit E 1 (nuoE1).